The following is a 153-amino-acid chain: L-alanine exporter AlaE (153 aa).

A run of 4 helical transmembrane segments spans residues 16-36 (VAMVIYCFITGMAVEMLLSEM), 42-62 (LSSRLLSIPVNIVIAWPYGLY), 86-106 (LFAYVSFQSPVYAAILWAIGA), and 114-134 (AVGSNAIISMLMGVVYGYFLE).

The protein belongs to the AlaE exporter family.

It is found in the cell inner membrane. Its function is as follows. Exports L-alanine. The chain is L-alanine exporter AlaE from Musicola paradisiaca (strain Ech703) (Dickeya paradisiaca).